Consider the following 203-residue polypeptide: Urease accessory protein UreG (203 aa).

14–21 serves as a coordination point for GTP; sequence GPVGSGKT.

The protein belongs to the SIMIBI class G3E GTPase family. UreG subfamily. As to quaternary structure, homodimer. UreD, UreF and UreG form a complex that acts as a GTP-hydrolysis-dependent molecular chaperone, activating the urease apoprotein by helping to assemble the nickel containing metallocenter of UreC. The UreE protein probably delivers the nickel.

The protein localises to the cytoplasm. Its function is as follows. Facilitates the functional incorporation of the urease nickel metallocenter. This process requires GTP hydrolysis, probably effectuated by UreG. This is Urease accessory protein UreG from Rhizobium johnstonii (strain DSM 114642 / LMG 32736 / 3841) (Rhizobium leguminosarum bv. viciae).